Consider the following 402-residue polypeptide: Propionate kinase (402 aa).

N11 and K18 together coordinate ATP. Residue N11 participates in Mg(2+) binding. R86 contacts substrate. The Proton donor/acceptor role is filled by D143. Residues H175, 203–207 (HLGNG), 278–280 (DLR), and 326–330 (GIGEN) contribute to the ATP site.

Belongs to the acetokinase family. TdcD subfamily. Homodimer. Requires Mg(2+) as cofactor.

It catalyses the reaction propanoate + ATP = propanoyl phosphate + ADP. The protein operates within amino-acid degradation; L-threonine degradation via propanoate pathway; propanoate from L-threonine: step 4/4. Catalyzes the conversion of propionyl phosphate and ADP to propionate and ATP. This is Propionate kinase from Salmonella agona (strain SL483).